A 533-amino-acid polypeptide reads, in one-letter code: Thromboxane-A synthase (533 aa).

The Cytoplasmic portion of the chain corresponds to methionine 1–glutamate 10. Residues valine 11 to tyrosine 31 traverse the membrane as a helical segment. Topologically, residues serine 32 to glycine 75 are lumenal. The chain crosses the membrane as a helical span at residues proline 76–isoleucine 96. The Cytoplasmic portion of the chain corresponds to lysine 97–arginine 223. Residues proline 224–proline 244 form a helical membrane-spanning segment. The Lumenal segment spans residues asparagine 245–alanine 335. Residues phenylalanine 336 to leucine 356 form a helical membrane-spanning segment. The Cytoplasmic portion of the chain corresponds to leucine 357–arginine 533. Cysteine 479 is a heme binding site.

Belongs to the cytochrome P450 family. Monomer. Heme is required as a cofactor.

The protein resides in the endoplasmic reticulum membrane. It carries out the reaction prostaglandin H2 = thromboxane A2. The catalysed reaction is prostaglandin H2 = (12S)-hydroxy-(5Z,8E,10E)-heptadecatrienoate + malonaldehyde. It catalyses the reaction a hydroperoxyeicosatetraenoate = an oxoeicosatetraenoate + H2O. The enzyme catalyses (15S)-hydroperoxy-(5Z,8Z,11Z,13E)-eicosatetraenoate = 15-oxo-(5Z,8Z,11Z,13E)-eicosatetraenoate + H2O. It carries out the reaction (15S)-hydroperoxy-(5Z,8Z,11Z,13E)-eicosatetraenoate + AH2 = (15S)-hydroxy-(5Z,8Z,11Z,13E)-eicosatetraenoate + A + H2O. In terms of biological role, catalyzes the conversion of prostaglandin H2 (PGH2) to thromboxane A2 (TXA2), a potent inducer of blood vessel constriction and platelet aggregation. Also cleaves PGH2 to 12-hydroxy-heptadecatrienoicacid (12-HHT) and malondialdehyde, which is known to act as a mediator of DNA damage. 12-HHT and malondialdehyde are formed stoichiometrically in the same amounts as TXA2. Additionally, displays dehydratase activity, toward (15S)-hydroperoxy-(5Z,8Z,11Z,13E)-eicosatetraenoate (15(S)-HPETE) producing 15-KETE and 15-HETE. This is Thromboxane-A synthase (TBXAS1) from Macaca fascicularis (Crab-eating macaque).